The sequence spans 263 residues: Small ribosomal subunit protein uS2 (263 aa).

Positions 223-249 (KALREQDGEALANEEKEITDEEKKEVL) are enriched in basic and acidic residues. Residues 223 to 263 (KALREQDGEALANEEKEITDEEKKEVLDEAMSEEDFGEEQE) form a disordered region. The segment covering 250 to 263 (DEAMSEEDFGEEQE) has biased composition (acidic residues).

It belongs to the universal ribosomal protein uS2 family.

In Campylobacter jejuni subsp. jejuni serotype O:6 (strain 81116 / NCTC 11828), this protein is Small ribosomal subunit protein uS2.